The following is a 112-amino-acid chain: 2Fe-2S ferredoxin (112 aa).

In terms of domain architecture, 2Fe-2S ferredoxin-type spans 5–107; that stretch reads IKVTFIINDG…GIKVRLPSAT (103 aa). Cys-42, Cys-48, Cys-51, and Cys-88 together coordinate [2Fe-2S] cluster.

The protein belongs to the adrenodoxin/putidaredoxin family. [2Fe-2S] cluster serves as cofactor.

In terms of biological role, ferredoxin are iron-sulfur proteins that transfer electrons in a wide variety of metabolic reactions. This chain is 2Fe-2S ferredoxin (fdxB), found in Rickettsia montanensis.